Consider the following 260-residue polypeptide: Adenosylcobinamide-GDP ribazoletransferase (260 aa).

Transmembrane regions (helical) follow at residues 42-62 (PLAG…ANAI), 64-84 (LPPL…TGAL), 117-137 (FAAL…MAII), 144-164 (YALL…LAFW), 192-212 (GLGL…VALI), 214-234 (ALVL…AKIG), and 240-260 (TLGA…VMAL).

This sequence belongs to the CobS family. Requires Mg(2+) as cofactor.

The protein localises to the cell inner membrane. The catalysed reaction is alpha-ribazole + adenosylcob(III)inamide-GDP = adenosylcob(III)alamin + GMP + H(+). The enzyme catalyses alpha-ribazole 5'-phosphate + adenosylcob(III)inamide-GDP = adenosylcob(III)alamin 5'-phosphate + GMP + H(+). It functions in the pathway cofactor biosynthesis; adenosylcobalamin biosynthesis; adenosylcobalamin from cob(II)yrinate a,c-diamide: step 7/7. Joins adenosylcobinamide-GDP and alpha-ribazole to generate adenosylcobalamin (Ado-cobalamin). Also synthesizes adenosylcobalamin 5'-phosphate from adenosylcobinamide-GDP and alpha-ribazole 5'-phosphate. The sequence is that of Adenosylcobinamide-GDP ribazoletransferase from Brucella ovis (strain ATCC 25840 / 63/290 / NCTC 10512).